A 248-amino-acid chain; its full sequence is Probable transcriptional regulatory protein FTL_0929 (248 aa).

This sequence belongs to the TACO1 family.

The protein localises to the cytoplasm. This Francisella tularensis subsp. holarctica (strain LVS) protein is Probable transcriptional regulatory protein FTL_0929.